The chain runs to 461 residues: MRPQVIIIGRPNVGKSTLFNRLVGKKLALVDDQPGVTRDRRFGDASLLGLDFTIVDTAGWEDEDPSTLPGRMRKQTEASLVGADVALFVIDARAGVTPLDEEIARYLRQSTVPIVLMANKAEGRAGDPGIFEAFSLGFGEPVAFSAEHGQGLADLFEALLPLIGEKQDDEDGEGEEAEDEEEEFDPESVLKLAIVGRPNAGKSTLINKLLGEDRLLTGPEAGITRDSIAIDWQWFDPEREAYRPVRLIDTAGMRKKAQVTDKLEKLSVADARHAIDFAEVVVLVLDATRGLEHQDLKIASMVIEEGRALMIAINKWDVAEDPSGLFQGIRKALDEGLAQVRGVPLLAISGRTGKGLDELLKAAFEIRAAWSKRVPTAALNRWFDDALAANPPPAPGGRRIKLRYITQAKTRPPGFVLFGTRLDQLPESYRRYLINGIRRELGFDAVPIRLTLRSPKNPFAK.

EngA-type G domains lie at 3-167 (PQVI…GEKQ) and 190-371 (LKLA…AAWS). GTP-binding positions include 9–16 (GRPNVGKS), 56–60 (DTAGW), 119–122 (NKAE), 196–203 (GRPNAGKS), 249–253 (DTAGM), and 314–317 (NKWD). In terms of domain architecture, KH-like spans 372-456 (KRVPTAALNR…PIRLTLRSPK (85 aa)).

Belongs to the TRAFAC class TrmE-Era-EngA-EngB-Septin-like GTPase superfamily. EngA (Der) GTPase family. In terms of assembly, associates with the 50S ribosomal subunit.

In terms of biological role, GTPase that plays an essential role in the late steps of ribosome biogenesis. The polypeptide is GTPase Der (Novosphingobium aromaticivorans (strain ATCC 700278 / DSM 12444 / CCUG 56034 / CIP 105152 / NBRC 16084 / F199)).